Here is a 241-residue protein sequence, read N- to C-terminus: Urease accessory protein UreF (241 aa).

The protein belongs to the UreF family. UreD, UreF and UreG form a complex that acts as a GTP-hydrolysis-dependent molecular chaperone, activating the urease apoprotein by helping to assemble the nickel containing metallocenter of UreC. The UreE protein probably delivers the nickel.

It localises to the cytoplasm. Required for maturation of urease via the functional incorporation of the urease nickel metallocenter. The protein is Urease accessory protein UreF of Rhodopseudomonas palustris (strain BisB18).